The sequence spans 181 residues: Large ribosomal subunit protein uL5 (181 aa).

The protein belongs to the universal ribosomal protein uL5 family. In terms of assembly, part of the 50S ribosomal subunit; part of the 5S rRNA/L5/L18/L25 subcomplex. Contacts the 5S rRNA and the P site tRNA. Forms a bridge to the 30S subunit in the 70S ribosome.

This is one of the proteins that bind and probably mediate the attachment of the 5S RNA into the large ribosomal subunit, where it forms part of the central protuberance. In the 70S ribosome it contacts protein S13 of the 30S subunit (bridge B1b), connecting the 2 subunits; this bridge is implicated in subunit movement. Contacts the P site tRNA; the 5S rRNA and some of its associated proteins might help stabilize positioning of ribosome-bound tRNAs. The protein is Large ribosomal subunit protein uL5 of Sulfurovum sp. (strain NBC37-1).